Reading from the N-terminus, the 736-residue chain is Segment polarity protein dishevelled homolog DVL-2 (736 aa).

The DIX domain occupies 11-93; that stretch reads VGETKVIYHL…RVVSWLVSSD (83 aa). Residues 93 to 255 are disordered; it reads DTPQPEVAPP…RMERTSSFSS (163 aa). Residues 111 to 122 are compositionally biased toward pro residues; sequence VPPPPPLPPLPP. Residues 159–171 are compositionally biased toward basic and acidic residues; it reads LRRDRPRRRDSSE. Positions 193-208 are enriched in low complexity; sequence ESSSTLMTSELESTSL. Ser211 bears the Phosphoserine mark. The span at 218 to 230 shows a compositional bias: polar residues; the sequence is SRFSSSTEQSSAS. Basic residues predominate over residues 232-244; it reads LLKRHRRRRKQRP. The PDZ domain occupies 267–339; the sequence is TVTLNMEKYN…NDDAVRVLRD (73 aa). One can recognise a DEP domain in the interval 433-507; that stretch reads PESGLEVRDR…SEQCYYVFGD (75 aa). Over residues 558–568 the composition is skewed to pro residues; sequence PHPYSPQPPPY. Residues 558-665 are disordered; the sequence is PHPYSPQPPP…PNLRALPGLH (108 aa). Composition is skewed to low complexity over residues 581-598 and 614-629; these read ASSQHSEGSRSSGSTRSD and SKSGSGSESELSSRGG.

This sequence belongs to the DSH family. In terms of assembly, interacts through its PDZ domain with the C-terminal regions of VANGL1 and VANGL2. Interacts with Rac. Interacts with ARRB1; the interaction is enhanced by phosphorylation of DVL1. Can form large oligomers (via DIX domain). Interacts (via DIX domain) with DIXDC1 (via DIX domain). Interacts (via DEP domain) with AP2M1 and the AP-2 complex. Interacts with FAM105B/otulin. Interacts with DCDC2. Interacts (when phosphorylated) with FOXK1 and FOXK2; the interaction induces DVL2 nuclear translocation. Interacts with MAPK15. Interacts with PKD1 (via extracellular domain). Interacts with LMBR1L. In terms of processing, phosphorylated by CSNK1D. WNT3A induces DVL2 phosphorylation by CSNK1E and MARK kinases. Ubiquitinated via 'Lys-63'-linked polyubiquitin chains; leading to its autophagy-mediated degradation. In terms of tissue distribution, ubiquitous.

It localises to the cell membrane. The protein localises to the cytoplasm. The protein resides in the cytosol. It is found in the cytoplasmic vesicle. Its subcellular location is the nucleus. Plays a role in the signal transduction pathways mediated by multiple Wnt genes. Participates both in canonical and non-canonical Wnt signaling by binding to the cytoplasmic C-terminus of frizzled family members and transducing the Wnt signal to down-stream effectors. Promotes internalization and degradation of frizzled proteins upon Wnt signaling. This is Segment polarity protein dishevelled homolog DVL-2 (Dvl2) from Mus musculus (Mouse).